Here is a 455-residue protein sequence, read N- to C-terminus: Venom prothrombin activator hopsarin-D (455 aa).

The N-terminal stretch at Met1–Ala20 is a signal peptide. The propeptide occupies Glu21 to Arg40. Residues Ser41–Asp86 form the Gla domain. A 4-carboxyglutamate mark is found at Glu46, Glu47, Glu54, Glu56, Glu59, Glu60, Glu65, Glu66, Glu69, Glu72, and Glu75. Cysteines 57 and 62 form a disulfide. The 36-residue stretch at Asp86 to Cys121 folds into the EGF-like 1; calcium-binding domain. Disulfide bonds link Cys90/Cys101, Cys95/Cys110, Cys112/Cys121, Cys129/Cys140, Cys136/Cys149, Cys151/Cys164, Cys172/Cys328, Cys236/Cys252, Cys376/Cys390, and Cys401/Cys429. Ser92 carries an O-linked (Hex...) serine glycan. Residues Cys129–Cys164 form the EGF-like 2 domain. The propeptide at Arg182–Arg209 is activation peptide. The Peptidase S1 domain occupies Ile210–Ser453. The active-site Charge relay system is His251. Asn254 is a glycosylation site (N-linked (GlcNAc...) asparagine). Asp308 (charge relay system) is an active-site residue. The Charge relay system role is filled by Ser405.

This sequence belongs to the peptidase S1 family. Snake venom subfamily. As to quaternary structure, heterodimer of a light chain and a heavy chain; disulfide-linked. The vitamin K-dependent, enzymatic carboxylation of some glutamate residues allows the modified protein to bind calcium. As to expression, expressed by the venom gland.

The protein localises to the secreted. It catalyses the reaction Selective cleavage of Arg-|-Thr and then Arg-|-Ile bonds in prothrombin to form thrombin.. Snake prothrombin activator that attacks the hemostatic system of prey. This protein is functionally similar to blood coagulation factor Xa. The procoagulant activity of hopsarin-D is approximately 10-fold lower than that of trocarin-D and FXa. This is Venom prothrombin activator hopsarin-D from Hoplocephalus stephensii (Stephens's banded snake).